Here is a 455-residue protein sequence, read N- to C-terminus: Zinc finger protein ZPR1 homolog (455 aa).

2 consecutive C4-type zinc fingers follow at residues 28 to 60 (CPVC…CPHC) and 247 to 279 (CPNC…CDRC).

The protein belongs to the ZPR1 family.

Its subcellular location is the nucleus. This chain is Zinc finger protein ZPR1 homolog, found in Caenorhabditis elegans.